A 245-amino-acid chain; its full sequence is Aliphatic sulfonates import ATP-binding protein SsuB 1 (245 aa).

The 219-residue stretch at 9 to 227 (LDLVGIGHRY…HRGDAQLAAW (219 aa)) folds into the ABC transporter domain. 41–48 (GPSGVGKS) lines the ATP pocket.

Belongs to the ABC transporter superfamily. Aliphatic sulfonates importer (TC 3.A.1.17.2) family. In terms of assembly, the complex is composed of two ATP-binding proteins (SsuB), two transmembrane proteins (SsuC) and a solute-binding protein (SsuA).

The protein resides in the cell membrane. The enzyme catalyses ATP + H2O + aliphatic sulfonate-[sulfonate-binding protein]Side 1 = ADP + phosphate + aliphatic sulfonateSide 2 + [sulfonate-binding protein]Side 1.. In terms of biological role, part of the ABC transporter complex SsuABC involved in aliphatic sulfonates import. Responsible for energy coupling to the transport system. The sequence is that of Aliphatic sulfonates import ATP-binding protein SsuB 1 from Rhodococcus jostii (strain RHA1).